Here is a 132-residue protein sequence, read N- to C-terminus: Acyl carrier protein 3, chloroplastic (132 aa).

A chloroplast-targeting transit peptide spans 1 to 49; that stretch reads MASIAGSAVSFAKPVKAINTNSLSFSGARRGNAFLRLQPVPMRFAVCCS. A Carrier domain is found at 52-127; the sequence is QDTVEKVCEI…DAATLIDKLV (76 aa). Ser87 carries the post-translational modification O-(pantetheine 4'-phosphoryl)serine.

It belongs to the acyl carrier protein (ACP) family. In terms of processing, 4'-phosphopantetheine is transferred from CoA to a specific serine of apo-ACP by acpS. This modification is essential for activity because fatty acids are bound in thioester linkage to the sulfhydryl of the prosthetic group.

The protein localises to the plastid. Its subcellular location is the chloroplast. It participates in lipid metabolism; fatty acid biosynthesis. Its function is as follows. Carrier of the growing fatty acid chain in fatty acid biosynthesis. The chain is Acyl carrier protein 3, chloroplastic (ACL1.3) from Hordeum vulgare (Barley).